The primary structure comprises 313 residues: 2-phosphoglycerate kinase (313 aa).

Positions 8–95 (SRILVKDKEY…LWRRVLKKHS (88 aa)) constitute an ATP-cone domain.

This sequence belongs to the 2-phosphoglycerate kinase family. A divalent metal cation is required as a cofactor.

It catalyses the reaction (2R)-2-phosphoglycerate + ATP = (2R)-2,3-bisphosphoglycerate + ADP + H(+). Its pathway is thermoadapter biosynthesis; cyclic 2,3-diphosphoglycerate biosynthesis; cyclic 2,3-diphosphoglycerate from 2-phospho-D-glycerate: step 1/2. Catalyzes the phosphorylation of 2-phosphoglycerate to 2,3-diphosphoglycerate. Involved in the biosynthesis of cyclic 2,3-bisphosphoglycerate, a thermoprotectant. In Methanococcus maripaludis (strain C5 / ATCC BAA-1333), this protein is 2-phosphoglycerate kinase.